An 86-amino-acid chain; its full sequence is Exodeoxyribonuclease 7 small subunit (86 aa).

Residues 1–26 (MQDELFETEKIPPKNTKNTKNAPKKS) form a disordered region.

Belongs to the XseB family. In terms of assembly, heterooligomer composed of large and small subunits.

Its subcellular location is the cytoplasm. The catalysed reaction is Exonucleolytic cleavage in either 5'- to 3'- or 3'- to 5'-direction to yield nucleoside 5'-phosphates.. Functionally, bidirectionally degrades single-stranded DNA into large acid-insoluble oligonucleotides, which are then degraded further into small acid-soluble oligonucleotides. This is Exodeoxyribonuclease 7 small subunit from Helicobacter pylori (strain ATCC 700392 / 26695) (Campylobacter pylori).